The primary structure comprises 99 residues: Protein dpy-30 homolog (99 aa).

Residue M1 is modified to N-acetylmethionine. The interval 1 to 26 is disordered; sequence MESEQMLEGQTQVAENPHSEYGLTDS. A Phosphoserine modification is found at S19. K35 is subject to N6-acetyllysine; alternate. K35 is covalently cross-linked (Glycyl lysine isopeptide (Lys-Gly) (interchain with G-Cter in SUMO2); alternate).

This sequence belongs to the dpy-30 family. As to quaternary structure, homodimer. Core component of several methyltransferase-containing complexes including MLL1/MLL, MLL2/3 (also named ASCOM complex) and MLL4/WBP7. Each complex is at least composed of ASH2L, RBBP5, WDR5, DPY30, one or more specific histone methyltransferases (KMT2A/MLL1, KMT2D/MLL2, KMT2C/MLL3 and KMT2B/MLL4), and the facultative components MEN1, HCFC1, HCFC2, NCOA6, KDM6A, PAXIP1/PTIP, PAGR1 and alpha- and beta-tubulin PAXIP1/PTIP, PAGR1 and alpha- and beta-tubulin. Interacts with ASH2L. The interaction with ASH2L is direct. Interacts with ARFGEF1. Component of the SET1 complex, at least composed of the catalytic subunit (SETD1A or SETD1B), WDR5, WDR82, RBBP5, ASH2L/ASH2, CXXC1/CFP1, HCFC1 and DPY30.

The protein resides in the nucleus. It localises to the golgi apparatus. The protein localises to the trans-Golgi network. In terms of biological role, as part of the MLL1/MLL complex, involved in the methylation of histone H3 at 'Lys-4', particularly trimethylation. Histone H3 'Lys-4' methylation represents a specific tag for epigenetic transcriptional activation. May play some role in histone H3 acetylation. In embryonic stem (ES) cells, plays a crucial role in the differentiation potential, particularly along the neural lineage, regulating gene induction and histone H3 'Lys-4' methylation at key developmental loci, including that mediated by retinoic acid. Does not affect ES cell self-renewal. May also play an indirect or direct role in endosomal transport. This is Protein dpy-30 homolog (Dpy30) from Mus musculus (Mouse).